We begin with the raw amino-acid sequence, 304 residues long: Non-specific ribonucleoside hydrolase RihC (304 aa).

His-233 is an active-site residue.

This sequence belongs to the IUNH family. RihC subfamily.

In terms of biological role, hydrolyzes both purine and pyrimidine ribonucleosides with a broad-substrate specificity. This Escherichia coli O45:K1 (strain S88 / ExPEC) protein is Non-specific ribonucleoside hydrolase RihC.